The sequence spans 215 residues: Adenylate kinase (215 aa).

10–15 contacts ATP; the sequence is GAGKGT. The NMP stretch occupies residues 30–59; that stretch reads STGDMFRAAMKNNTELGKKAKSFMDNGDLV. AMP-binding positions include T31, R36, 57-59, 85-88, and Q92; these read DLV and GFPR. The interval 126–163 is LID; that stretch reads GRWICRTCGKTYHEIYNPPKVPGKCDLDGGELYQRDDD. Residue R127 participates in ATP binding. Residues C130 and C133 each contribute to the Zn(2+) site. 136 to 137 contributes to the ATP binding site; that stretch reads TY. Residues C150 and D153 each coordinate Zn(2+). AMP contacts are provided by R160 and R171. Q199 lines the ATP pocket.

Belongs to the adenylate kinase family. Monomer.

The protein localises to the cytoplasm. It carries out the reaction AMP + ATP = 2 ADP. It functions in the pathway purine metabolism; AMP biosynthesis via salvage pathway; AMP from ADP: step 1/1. In terms of biological role, catalyzes the reversible transfer of the terminal phosphate group between ATP and AMP. Plays an important role in cellular energy homeostasis and in adenine nucleotide metabolism. The protein is Adenylate kinase of Listeria monocytogenes serotype 4b (strain CLIP80459).